The following is a 462-amino-acid chain: Argininosuccinate lyase (462 aa).

It belongs to the lyase 1 family. Argininosuccinate lyase subfamily.

It is found in the cytoplasm. It catalyses the reaction 2-(N(omega)-L-arginino)succinate = fumarate + L-arginine. It participates in amino-acid biosynthesis; L-arginine biosynthesis; L-arginine from L-ornithine and carbamoyl phosphate: step 3/3. The polypeptide is Argininosuccinate lyase (Methylobacterium sp. (strain 4-46)).